The chain runs to 156 residues: Translation initiation factor IF-1, chloroplastic (156 aa).

A chloroplast-targeting transit peptide spans 1–81 (MASLSWWNPA…RRTTSIQCLS (81 aa)). Positions 51-79 (KSLLVKTQQQSKKKKNNSTNSRRTTSIQC) are disordered. Residues 67 to 76 (NSTNSRRTTS) show a composition bias toward low complexity. In terms of domain architecture, S1-like spans 82–151 (QEQKWTHEGS…SKGRIIYRLR (70 aa)).

The protein belongs to the IF-1 family. As to quaternary structure, component of the 30S ribosomal translation pre-initiation complex which assembles on the 30S ribosome in the order IF-2 and IF-3, IF-1 and N-formylmethionyl-tRNA(fMet); mRNA recruitment can occur at any time during PIC assembly.

It is found in the plastid. It localises to the chloroplast. Its function is as follows. One of the essential components for the initiation of protein synthesis. Stabilizes the binding of IF-2 and IF-3 on the 30S subunit to which N-formylmethionyl-tRNA(fMet) subsequently binds. Helps modulate mRNA selection, yielding the 30S pre-initiation complex (PIC). Upon addition of the 50S ribosomal subunit IF-1, IF-2 and IF-3 are released leaving the mature 70S translation initiation complex. The sequence is that of Translation initiation factor IF-1, chloroplastic (infA) from Solanum lycopersicum (Tomato).